The sequence spans 1403 residues: Perilipin-4 (1403 aa).

Positions 1-21 (MSASGDGTRVPPKSKGKTLSS) are disordered. 2 positions are modified to phosphoserine: serine 25 and serine 31. A disordered region spans residues 33–70 (RNLVSHTHSSTSTKDLQTATDPSGTPAPSSKVSTNSQM). A run of 29 repeats spans residues 104 to 136 (GVFG…AVSG), 137 to 169 (GVMG…TVTT), 170 to 202 (GVMG…TVAT), 203 to 235 (GLAG…TVTT), 236 to 268 (GLTG…TVTT), 269 to 301 (GLTG…TVCA), 302 to 334 (GATG…TVTT), 335 to 367 (GLTG…TVTT), 368 to 400 (GLTG…TVCA), 401 to 433 (GLTG…TVTT), 434 to 466 (GLTG…TVTT), 467 to 499 (GLTG…TVTT), 500 to 532 (GLTG…TVTT), 533 to 565 (GLTG…TVCA), 566 to 598 (GLTG…TVTT), 599 to 631 (GLTG…TVTT), 632 to 664 (GLTG…TVTT), 665 to 697 (GLTG…TVCA), 698 to 730 (GATG…TVTT), 731 to 763 (GLTG…TVTT), 764 to 796 (GLTG…NVYA), 797 to 829 (GVTG…TVTT), 830 to 862 (GLTG…TVTT), 863 to 895 (GLTG…TVCA), 896 to 928 (GLTG…TVTT), 929 to 961 (GLTG…TVTT), 962 to 994 (GLTG…SICA), 995 to 1027 (GATG…TAKG), and 1028 to 1060 (TVQT…MAKG). A 29 X 33 AA approximate tandem repeat region spans residues 104-1060 (GVFGIMDAAK…VTSAMNMAKG (957 aa)). The residue at position 1281 (serine 1281) is a Phosphoserine. At threonine 1287 the chain carries Phosphothreonine.

This sequence belongs to the perilipin family. As to expression, specifically expressed in white adipose tissue and also weakly detected in heart and skeletal muscle (at protein level).

It is found in the cell membrane. It localises to the cytoplasm. The protein resides in the lipid droplet. Functionally, may play a role in triacylglycerol packaging into adipocytes. May function as a coat protein involved in the biogenesis of lipid droplets. This chain is Perilipin-4 (Plin4), found in Mus musculus (Mouse).